The sequence spans 138 residues: Ribulose bisphosphate carboxylase small subunit (138 aa).

This sequence belongs to the RuBisCO small chain family. In terms of assembly, heterohexadecamer of 8 large and 8 small subunits.

Its subcellular location is the plastid. It localises to the chloroplast. Its function is as follows. RuBisCO catalyzes two reactions: the carboxylation of D-ribulose 1,5-bisphosphate, the primary event in carbon dioxide fixation, as well as the oxidative fragmentation of the pentose substrate in the photorespiration process. Both reactions occur simultaneously and in competition at the same active site. Although the small subunit is not catalytic it is essential for maximal activity. This chain is Ribulose bisphosphate carboxylase small subunit, found in Pyropia suborbiculata (Red alga).